The sequence spans 377 residues: Succinyl-diaminopimelate desuccinylase (377 aa).

Residue His-67 coordinates Zn(2+). Residue Asp-69 is part of the active site. Residue Asp-100 participates in Zn(2+) binding. Residue Glu-134 is the Proton acceptor of the active site. Zn(2+) contacts are provided by Glu-135, Glu-163, and His-349.

This sequence belongs to the peptidase M20A family. DapE subfamily. As to quaternary structure, homodimer. Zn(2+) serves as cofactor. The cofactor is Co(2+).

The enzyme catalyses N-succinyl-(2S,6S)-2,6-diaminopimelate + H2O = (2S,6S)-2,6-diaminopimelate + succinate. It participates in amino-acid biosynthesis; L-lysine biosynthesis via DAP pathway; LL-2,6-diaminopimelate from (S)-tetrahydrodipicolinate (succinylase route): step 3/3. Functionally, catalyzes the hydrolysis of N-succinyl-L,L-diaminopimelic acid (SDAP), forming succinate and LL-2,6-diaminopimelate (DAP), an intermediate involved in the bacterial biosynthesis of lysine and meso-diaminopimelic acid, an essential component of bacterial cell walls. This is Succinyl-diaminopimelate desuccinylase from Dechloromonas aromatica (strain RCB).